A 357-amino-acid polypeptide reads, in one-letter code: 3-isopropylmalate dehydrogenase (357 aa).

76–89 (GPQWDTIDPALRPE) contributes to the NAD(+) binding site. 4 residues coordinate substrate: arginine 96, arginine 106, arginine 134, and aspartate 224. 3 residues coordinate Mg(2+): aspartate 224, aspartate 248, and aspartate 252. 282-294 (GSAPDIAGKGIAN) is an NAD(+) binding site.

The protein belongs to the isocitrate and isopropylmalate dehydrogenases family. LeuB type 1 subfamily. Homodimer. Mg(2+) serves as cofactor. It depends on Mn(2+) as a cofactor.

The protein localises to the cytoplasm. It carries out the reaction (2R,3S)-3-isopropylmalate + NAD(+) = 4-methyl-2-oxopentanoate + CO2 + NADH. Its pathway is amino-acid biosynthesis; L-leucine biosynthesis; L-leucine from 3-methyl-2-oxobutanoate: step 3/4. Functionally, catalyzes the oxidation of 3-carboxy-2-hydroxy-4-methylpentanoate (3-isopropylmalate) to 3-carboxy-4-methyl-2-oxopentanoate. The product decarboxylates to 4-methyl-2 oxopentanoate. This Xanthomonas axonopodis pv. citri (strain 306) protein is 3-isopropylmalate dehydrogenase.